The sequence spans 610 residues: Probable galacturonosyltransferase 5 (610 aa).

Topologically, residues 1-6 (MNQVRR) are cytoplasmic. Residues 7–27 (WQRILILSLLLLSVLAPIVFV) form a helical; Signal-anchor for type II membrane protein membrane-spanning segment. The Lumenal segment spans residues 28–610 (SNRLKSITSV…PHLQRCNIHD (583 aa)). Residues 86–101 (LSNSSDKSNDTVQSNE) are compositionally biased toward polar residues. Residues 86–170 (LSNSSDKSND…KNTRVQLERA (85 aa)) form a disordered region. 2 N-linked (GlcNAc...) asparagine glycosylation sites follow: N88 and N94. The span at 110-123 (EVDKGNNHKPKEEQ) shows a compositional bias: basic and acidic residues. Residues 124–135 (AVSQKTTVSSNA) are compositionally biased toward polar residues. A compositionally biased stretch (basic and acidic residues) spans 139 to 170 (ISARDIQLNHKTEFRPPSSKSEKNTRVQLERA). N-linked (GlcNAc...) asparagine glycosylation is found at N196, N338, N401, and N475.

This sequence belongs to the glycosyltransferase 8 family. As to expression, expressed in roots, inflorescences, siliques, leaves and stems.

It is found in the golgi apparatus membrane. The protein operates within glycan metabolism; pectin biosynthesis. Its function is as follows. May be involved in pectin and/or xylans biosynthesis in cell walls. The sequence is that of Probable galacturonosyltransferase 5 (GAUT5) from Arabidopsis thaliana (Mouse-ear cress).